Consider the following 263-residue polypeptide: MEGGFTGGDEYQKHFLPRDYLATYYSFDGSPSPEAEMLKFNLECLHKTFGPGGLQGDTLIDIGSGPTIYQVLAACESFQDITLSDFTDRNREELEKWLKKEPGAYDWTPVVKFACELEGNSGQWEEKEEKLRATVKRVLKCDVHLGNPLAPAVLPPADCVLTLLAMECACCSLDAYCAALCNLASLLKPGGHLVTTVTLRLSSYMVGKREFSCVALEKEEVEQAVLDAGFDIEQLLQSPQSYSVTNAANNGVCFIVARKKPGP.

Lys13 is subject to N6-succinyllysine. S-adenosyl-L-methionine is bound by residues Tyr20, Tyr25, 63–64 (GS), Tyr69, Asp85, and Asn90. Residue Lys96 is modified to N6-succinyllysine. S-adenosyl-L-methionine-binding positions include 142 to 143 (DV) and Leu163.

It belongs to the class I-like SAM-binding methyltransferase superfamily. NNMT/PNMT/TEMT family. In terms of assembly, monomer.

It is found in the cytoplasm. It carries out the reaction a tertiary amine + S-adenosyl-L-methionine = a methylated tertiary amine + S-adenosyl-L-homocysteine + H(+). The enzyme catalyses a secondary amine + S-adenosyl-L-methionine = a methylated secondary amine + S-adenosyl-L-homocysteine + H(+). It catalyses the reaction a primary amine + S-adenosyl-L-methionine = a methylated primary amine + S-adenosyl-L-homocysteine + H(+). The catalysed reaction is dimethyl sulfide + S-adenosyl-L-methionine = trimethylsulfonium + S-adenosyl-L-homocysteine. Catalyzes the N-methylation of tryptamine and structurally related compounds. Functions as a thioether S-methyltransferase and is active with a variety of thioethers and the corresponding selenium and tellurium compounds, including 3-methylthiopropionaldehyde, dimethyl selenide, dimethyl telluride, 2-methylthioethylamine, 2-methylthioethanol, methyl-n-propyl sulfide and diethyl sulfide. Plays an important role in the detoxification of selenium compounds. The protein is Indolethylamine N-methyltransferase (INMT) of Pongo abelii (Sumatran orangutan).